We begin with the raw amino-acid sequence, 182 residues long: Dual-action ribosomal maturation protein DarP (182 aa).

This sequence belongs to the DarP family.

It is found in the cytoplasm. Its function is as follows. Member of a network of 50S ribosomal subunit biogenesis factors which assembles along the 30S-50S interface, preventing incorrect 23S rRNA structures from forming. Promotes peptidyl transferase center (PTC) maturation. This chain is Dual-action ribosomal maturation protein DarP, found in Yersinia pestis.